The following is a 534-amino-acid chain: Monolignol oxidoreductase AtBBE-like 13 (534 aa).

A signal peptide spans 1-29; that stretch reads MAFVLMNNTNAFLVTLLLLSLSYIPLSFS. N7 and N59 each carry an N-linked (GlcNAc...) asparagine glycan. Residues C38 and C102 are joined by a disulfide bond. The 6-(S-cysteinyl)-8alpha-(pros-histidyl)-FAD (His-Cys) cross-link spans 117–181; that stretch reads HDYEGLSYVS…KIHGFPAGLC (65 aa).

The protein belongs to the oxygen-dependent FAD-linked oxidoreductase family. Requires FAD as cofactor. In terms of processing, the FAD cofactor is bound via a bicovalent 6-S-cysteinyl, 8alpha-N1-histidyl FAD linkage.

Its subcellular location is the secreted. It is found in the cell wall. The enzyme catalyses (E)-4-coumaroyl alcohol + A = (E)-4-coumaraldehyde + AH2. It carries out the reaction (E)-coniferol + A = (E)-coniferaldehyde + AH2. It catalyses the reaction (E)-sinapyl alcohol + A = (E)-sinapaldehyde + AH2. It participates in phenylpropanoid metabolism. Mediates oxidation of p-hydroxylated derivatives of cinnamyl alcohol (i.e. the monolignols p-coumaryl-, coniferyl-, and sinapyl alcohol) to their corresponding aldehydes. The electron acceptor required for these reactions is not known, but does not seem to be dioxygen. Is much less efficient towards cinnamyl alcohol. The sequence is that of Monolignol oxidoreductase AtBBE-like 13 from Arabidopsis thaliana (Mouse-ear cress).